Here is a 126-residue protein sequence, read N- to C-terminus: Small ribosomal subunit protein uS13c (126 aa).

The disordered stretch occupies residues 97-126; the sequence is PLRGQRTRTNARTRRGGKKTVAGKKKAPRK. Over residues 101–126 the composition is skewed to basic residues; the sequence is QRTRTNARTRRGGKKTVAGKKKAPRK.

This sequence belongs to the universal ribosomal protein uS13 family. Part of the 30S ribosomal subunit.

It is found in the plastid. The protein resides in the chloroplast. Located at the top of the head of the 30S subunit, it contacts several helices of the 16S rRNA. The polypeptide is Small ribosomal subunit protein uS13c (Pyropia yezoensis (Susabi-nori)).